Reading from the N-terminus, the 163-residue chain is Phosphopantetheine adenylyltransferase (163 aa).

Threonine 9 is a substrate binding site. Residues 9 to 10 (TF) and histidine 17 each bind ATP. Substrate is bound by residues lysine 41, leucine 76, and arginine 90. ATP-binding positions include 91 to 93 (GLR), glutamate 101, and 126 to 132 (HQAIASR).

Belongs to the bacterial CoaD family. Homohexamer. The cofactor is Mg(2+).

The protein localises to the cytoplasm. The catalysed reaction is (R)-4'-phosphopantetheine + ATP + H(+) = 3'-dephospho-CoA + diphosphate. It functions in the pathway cofactor biosynthesis; coenzyme A biosynthesis; CoA from (R)-pantothenate: step 4/5. In terms of biological role, reversibly transfers an adenylyl group from ATP to 4'-phosphopantetheine, yielding dephospho-CoA (dPCoA) and pyrophosphate. The sequence is that of Phosphopantetheine adenylyltransferase from Caulobacter vibrioides (strain ATCC 19089 / CIP 103742 / CB 15) (Caulobacter crescentus).